A 71-amino-acid chain; its full sequence is Frenatin 2.3S (71 aa).

An N-terminal signal peptide occupies residues 1-22 (MAFLKKSLFLVLFLGLVSLSMG). Positions 21–56 (MGEREKREEEEEEEEENKEEEANEEGKGESEEKRGL) are disordered. A propeptide spanning residues 23–54 (EREKREEEEEEEEENKEEEANEEGKGESEEKR) is cleaved from the precursor. Residues 28–43 (EEEEEEEEENKEEEAN) show a composition bias toward acidic residues. The span at 44-55 (EEGKGESEEKRG) shows a compositional bias: basic and acidic residues. G70 carries the post-translational modification Glycine amide; in Frenatin 2.1S.

This sequence belongs to the frog skin active peptide (FSAP) family. Frenatin subfamily. Frenatin 2.3S is not amidated. In terms of tissue distribution, expressed by the skin glands.

The protein localises to the secreted. Its function is as follows. Antimicrobial peptide with potent activity against Gram-negative bacteria. Shows immunostimulatory actions both in vitro and in vivo. In vitro, is cytotoxic to non-small cell lung adenocarcinoma A549 cells. Also, stimulates production of pro-inflammatory cytokines by mouse peritoneal macrophages and down-regulates production of the anti-inflammatory cytokine IL-10 by lipopolysaccharide (LPS)-stimulated cells. In vivo, intraperitoneal injection in mice enhances the activation state and homing capacity of Th1 type lymphocytes and promotes the recruitment, activation and tumoricidal capacities of peritoneal NK cells. Has a very weak activity in stimulation of insulin release and a weak hemolytic activity. Functionally, antimicrobial peptide with potent activity against some Gram-positive and Gram-negative bacteria. Has a multifunctional mode of action. It displays depolarization and bacterial cell leakage, and can also internalize into bacterial cells and alter specific gene expression involved in bacterial resistance mechanisms. Does not agglutinate bacteria and lipid vesicles, even a high concentrations. Also displays moderate cellular protection against yellow fever virus (YFV)-infected Vero cells without causing significant cytotoxicity. Shows a weak hemolytic activity, and is not cytotoxic to monocytes. Frenatin 2.3S (version without Gly-71) shows no or very weak antibacterial activity, shows no or very weak cytotoxicity to lung adenocarcinoma A549 cells and shows very weak hemolysis. It only stimulates production of pro-inflammatory cytokines IL-23 (but not IL-1beta and TNF-alpha) by mouse peritoneal macrophages and has no effect on the production of the anti-inflammatory cytokine IL-10. Frenatin 2.3S (version without Gly-71) very weakly stimulates insulin release. This is Frenatin 2.3S from Sphaenorhynchus lacteus (Orinoco lime treefrog).